Consider the following 270-residue polypeptide: Plasmanylethanolamine desaturase 1 (270 aa).

3 consecutive transmembrane segments (helical) span residues 47–67 (WCSVILCFSLIAHNLVHLLLL), 74–94 (PLVILGVVAGALIADFLSGLV), and 161–181 (ALEQLYPWECFVFCLIIFGTF). Positions 186 to 190 (HKWSH) match the Histidine box-1 motif. The short motif at 213-217 (HHRIH) is the Histidine box-2 element.

The protein belongs to the fatty acid desaturase CarF family.

It localises to the endoplasmic reticulum membrane. It carries out the reaction a 1-(1,2-saturated alkyl)-2-acyl-sn-glycero-3-phosphoethanolamine + 2 Fe(II)-[cytochrome b5] + O2 + 2 H(+) = a 1-O-(1Z-alkenyl)-2-acyl-sn-glycero-3-phosphoethanolamine + 2 Fe(III)-[cytochrome b5] + 2 H2O. It catalyses the reaction a 1-O-hexadecyl-2-acyl-sn-glycero-3-phosphoethanolamine + 2 Fe(II)-[cytochrome b5] + O2 + 2 H(+) = a 1-O-(1Z-hexadecenyl)-2-acyl-sn-glycero-3-phosphoethanolamine + 2 Fe(III)-[cytochrome b5] + 2 H2O. The enzyme catalyses a 1-O-octadecyl-2-acyl-sn-glycero-3-phosphoethanolamine + 2 Fe(II)-[cytochrome b5] + O2 + 2 H(+) = a 1-O-(1Z-octadecenyl)-2-acyl-sn-glycero-3-phosphoethanolamine + 2 Fe(III)-[cytochrome b5] + 2 H2O. The catalysed reaction is a 1-O-(9Z-octadecenyl)-2-acyl-sn-glycero-3-phosphoethanolamine + 2 Fe(II)-[cytochrome b5] + O2 + 2 H(+) = a 1-O-(1Z,9Z-octadecadienyl)-2-acyl-sn-glycero-3-phosphoethanolamine + 2 Fe(III)-[cytochrome b5] + 2 H2O. Its pathway is lipid metabolism; fatty acid metabolism. Its function is as follows. Plasmanylethanolamine desaturase involved in plasmalogen biogenesis in the endoplasmic reticulum membrane. Plasmalogens are glycerophospholipids with a hydrocarbon chain linked by a vinyl ether bond at the glycerol sn-1 position, and are involved in antioxidative and signaling mechanisms. The polypeptide is Plasmanylethanolamine desaturase 1 (Homo sapiens (Human)).